The sequence spans 724 residues: Probable methyltransferase PMT28 (724 aa).

Topologically, residues 1–22 (MMERKREMGIAYFARRIKQPRG) are cytoplasmic. The helical; Signal-anchor for type II membrane protein transmembrane segment at 23-43 (IWVKMTFIVVLGLCFVFFWSF) threads the bilayer. At 44–724 (LSSSASTFNV…LCAQKTLWRP (681 aa)) the chain is on the lumenal side. Residues 63–211 (EPVSSRTKSA…ISKKRKRKGP (149 aa)) are disordered. The span at 71 to 98 (SAHEVSESSKLHERGKVESGSKSKEGKK) shows a compositional bias: basic and acidic residues. Residues 107 to 125 (HETKKKKEHAVSHPHKKKD) are compositionally biased toward basic residues. A compositionally biased stretch (basic and acidic residues) spans 126 to 140 (VPKPVVEEVVVKEDQ). Positions 141–173 (EHEEAESDDSDQSNKEDGEEGTESDGNEGESDG) are enriched in acidic residues. Residues Asn-305, Asn-316, and Asn-568 are each glycosylated (N-linked (GlcNAc...) asparagine).

This sequence belongs to the methyltransferase superfamily.

The protein localises to the golgi apparatus membrane. The polypeptide is Probable methyltransferase PMT28 (Arabidopsis thaliana (Mouse-ear cress)).